A 253-amino-acid polypeptide reads, in one-letter code: Transcription factor ORG2 (253 aa).

The 53-residue stretch at 71–123 folds into the bHLH domain; it reads VKKLNHNASERDRRKKINTLFSSLRSCLPASDQSKKLSIPETVSKSLKYIPEL.

As to quaternary structure, homodimer. In terms of tissue distribution, roots.

It is found in the nucleus. The chain is Transcription factor ORG2 (ORG2) from Arabidopsis thaliana (Mouse-ear cress).